A 274-amino-acid chain; its full sequence is Proteasome subunit beta type-7-B (274 aa).

A propeptide spans 1–37 (removed in mature form); the sequence is MSQSSVDIPPKGGFSFDLCKRNDMLTQKGLKAPSFLK. The Nucleophile role is filled by threonine 40.

It belongs to the peptidase T1B family. In terms of assembly, component of the 20S core complex of the 26S proteasome. The 26S proteasome is composed of a core protease (CP), known as the 20S proteasome, capped at one or both ends by the 19S regulatory particle (RP/PA700). The 20S proteasome core is composed of 28 subunits that are arranged in four stacked rings, resulting in a barrel-shaped structure. The two end rings are each formed by seven alpha subunits, and the two central rings are each formed by seven beta subunits. The catalytic chamber with the active sites is on the inside of the barrel.

It localises to the cytoplasm. The protein resides in the nucleus. It carries out the reaction Cleavage of peptide bonds with very broad specificity.. Its function is as follows. The proteasome is a multicatalytic proteinase complex which is characterized by its ability to cleave peptides with Arg, Phe, Tyr, Leu, and Glu adjacent to the leaving group at neutral or slightly basic pH. The proteasome has an ATP-dependent proteolytic activity. This Arabidopsis thaliana (Mouse-ear cress) protein is Proteasome subunit beta type-7-B (PBB2).